A 264-amino-acid polypeptide reads, in one-letter code: MTLSAPSDALVIAGKPYRSRLLTGTGKFKDLDETRLATEAAAAQIVTVAIRRVNIGQDPNAPSLLDVLPPDRYTLLPNTAGCYTAEDAVRTCRLARELLDGHNLTKLEVLGDERTLYPDVVQTLKAAEQLVADGFEVMVYTSDDPILAKRLEEIGCVAVMPLAAPIGSGLGIQNKYNLLEIIENAKVPIIVDAGVGTASDAAIAMELGCDGVLMNTAIAGARDPILMASAMRKAIEAGREAFLAGRIPRKRYASASSPVDGVIG.

Lys-106 functions as the Schiff-base intermediate with DXP in the catalytic mechanism. Residues Gly-167, 193 to 194, and 215 to 216 contribute to the 1-deoxy-D-xylulose 5-phosphate site; these read AG and NT.

Belongs to the ThiG family. Homotetramer. Forms heterodimers with either ThiH or ThiS.

The protein localises to the cytoplasm. It carries out the reaction [ThiS sulfur-carrier protein]-C-terminal-Gly-aminoethanethioate + 2-iminoacetate + 1-deoxy-D-xylulose 5-phosphate = [ThiS sulfur-carrier protein]-C-terminal Gly-Gly + 2-[(2R,5Z)-2-carboxy-4-methylthiazol-5(2H)-ylidene]ethyl phosphate + 2 H2O + H(+). The protein operates within cofactor biosynthesis; thiamine diphosphate biosynthesis. In terms of biological role, catalyzes the rearrangement of 1-deoxy-D-xylulose 5-phosphate (DXP) to produce the thiazole phosphate moiety of thiamine. Sulfur is provided by the thiocarboxylate moiety of the carrier protein ThiS. In vitro, sulfur can be provided by H(2)S. This chain is Thiazole synthase, found in Xanthomonas campestris pv. campestris (strain 8004).